The primary structure comprises 334 residues: Glycerol-3-phosphate dehydrogenase [NAD(P)+] (334 aa).

NADPH contacts are provided by Trp-14, Arg-34, and Lys-107. Residues Lys-107 and Gly-135 each contribute to the sn-glycerol 3-phosphate site. NADPH is bound at residue Ala-139. Residues Lys-190, Asp-243, Ser-253, Arg-254, and Asn-255 each coordinate sn-glycerol 3-phosphate. Catalysis depends on Lys-190, which acts as the Proton acceptor. Residue Arg-254 participates in NADPH binding. 2 residues coordinate NADPH: Val-272 and Glu-273.

Belongs to the NAD-dependent glycerol-3-phosphate dehydrogenase family.

The protein resides in the cytoplasm. The catalysed reaction is sn-glycerol 3-phosphate + NAD(+) = dihydroxyacetone phosphate + NADH + H(+). It catalyses the reaction sn-glycerol 3-phosphate + NADP(+) = dihydroxyacetone phosphate + NADPH + H(+). It participates in membrane lipid metabolism; glycerophospholipid metabolism. Its function is as follows. Catalyzes the reduction of the glycolytic intermediate dihydroxyacetone phosphate (DHAP) to sn-glycerol 3-phosphate (G3P), the key precursor for phospholipid synthesis. The chain is Glycerol-3-phosphate dehydrogenase [NAD(P)+] from Neorickettsia sennetsu (strain ATCC VR-367 / Miyayama) (Ehrlichia sennetsu).